Here is a 159-residue protein sequence, read N- to C-terminus: ATP synthase subunit b (159 aa).

The chain crosses the membrane as a helical span at residues 2–22; that stretch reads NISIPQIIAAILNFIILLLIV.

The protein belongs to the ATPase B chain family. F-type ATPases have 2 components, F(1) - the catalytic core - and F(0) - the membrane proton channel. F(1) has five subunits: alpha(3), beta(3), gamma(1), delta(1), epsilon(1). F(0) has three main subunits: a(1), b(2) and c(10-14). The alpha and beta chains form an alternating ring which encloses part of the gamma chain. F(1) is attached to F(0) by a central stalk formed by the gamma and epsilon chains, while a peripheral stalk is formed by the delta and b chains.

It is found in the cell membrane. F(1)F(0) ATP synthase produces ATP from ADP in the presence of a proton or sodium gradient. F-type ATPases consist of two structural domains, F(1) containing the extramembraneous catalytic core and F(0) containing the membrane proton channel, linked together by a central stalk and a peripheral stalk. During catalysis, ATP synthesis in the catalytic domain of F(1) is coupled via a rotary mechanism of the central stalk subunits to proton translocation. In terms of biological role, component of the F(0) channel, it forms part of the peripheral stalk, linking F(1) to F(0). This is ATP synthase subunit b from Clostridium botulinum (strain ATCC 19397 / Type A).